Reading from the N-terminus, the 250-residue chain is 1-(5-phosphoribosyl)-5-[(5-phosphoribosylamino)methylideneamino] imidazole-4-carboxamide isomerase (250 aa).

The Proton acceptor role is filled by aspartate 10. The active-site Proton donor is aspartate 131.

This sequence belongs to the HisA/HisF family.

Its subcellular location is the cytoplasm. The enzyme catalyses 1-(5-phospho-beta-D-ribosyl)-5-[(5-phospho-beta-D-ribosylamino)methylideneamino]imidazole-4-carboxamide = 5-[(5-phospho-1-deoxy-D-ribulos-1-ylimino)methylamino]-1-(5-phospho-beta-D-ribosyl)imidazole-4-carboxamide. Its pathway is amino-acid biosynthesis; L-histidine biosynthesis; L-histidine from 5-phospho-alpha-D-ribose 1-diphosphate: step 4/9. The polypeptide is 1-(5-phosphoribosyl)-5-[(5-phosphoribosylamino)methylideneamino] imidazole-4-carboxamide isomerase (Desulfitobacterium hafniense (strain DSM 10664 / DCB-2)).